We begin with the raw amino-acid sequence, 184 residues long: Shikimate kinase (184 aa).

17–22 (GAGKTT) is a binding site for ATP. Residue Thr-21 coordinates Mg(2+). Substrate-binding residues include Asp-39, Arg-63, and Gly-85. Residue Arg-123 participates in ATP binding. Residue Arg-142 participates in substrate binding.

The protein belongs to the shikimate kinase family. In terms of assembly, monomer. The cofactor is Mg(2+).

The protein resides in the cytoplasm. It catalyses the reaction shikimate + ATP = 3-phosphoshikimate + ADP + H(+). The protein operates within metabolic intermediate biosynthesis; chorismate biosynthesis; chorismate from D-erythrose 4-phosphate and phosphoenolpyruvate: step 5/7. Functionally, catalyzes the specific phosphorylation of the 3-hydroxyl group of shikimic acid using ATP as a cosubstrate. The protein is Shikimate kinase of Burkholderia lata (strain ATCC 17760 / DSM 23089 / LMG 22485 / NCIMB 9086 / R18194 / 383).